Consider the following 448-residue polypeptide: Asparagine--tRNA ligase (448 aa).

Belongs to the class-II aminoacyl-tRNA synthetase family. In terms of assembly, homodimer.

It is found in the cytoplasm. The catalysed reaction is tRNA(Asn) + L-asparagine + ATP = L-asparaginyl-tRNA(Asn) + AMP + diphosphate + H(+). The protein is Asparagine--tRNA ligase of Streptococcus pyogenes serotype M2 (strain MGAS10270).